The sequence spans 156 residues: Small ribosomal subunit protein uS7 (156 aa).

It belongs to the universal ribosomal protein uS7 family. As to quaternary structure, part of the 30S ribosomal subunit. Contacts proteins S9 and S11.

In terms of biological role, one of the primary rRNA binding proteins, it binds directly to 16S rRNA where it nucleates assembly of the head domain of the 30S subunit. Is located at the subunit interface close to the decoding center, probably blocks exit of the E-site tRNA. The sequence is that of Small ribosomal subunit protein uS7 from Pelotomaculum thermopropionicum (strain DSM 13744 / JCM 10971 / SI).